The sequence spans 247 residues: Adenylate kinase (247 aa).

42-47 (GAGKGT) serves as a coordination point for ATP. The segment at 62–91 (ATGDMLRAQVTAKTELGVQAKKIMDQGGLV) is NMP. AMP contacts are provided by residues Thr-63, Arg-68, 89–91 (GLV), 118–121 (GFPR), and Gln-125. Positions 159-196 (GRLVHPASGRSYHKLFNPPKKEMTDDQTGEPLVQRSDD) are LID. ATP is bound by residues Arg-160 and 169-170 (SY). A disordered region spans residues 169-191 (SYHKLFNPPKKEMTDDQTGEPLV). AMP contacts are provided by Arg-193 and Arg-204. Gln-232 lines the ATP pocket.

The protein belongs to the adenylate kinase family. AK2 subfamily. Monomer.

Its subcellular location is the cytoplasm. The protein localises to the cytosol. It localises to the mitochondrion intermembrane space. The enzyme catalyses AMP + ATP = 2 ADP. Catalyzes the reversible transfer of the terminal phosphate group between ATP and AMP. Plays an important role in cellular energy homeostasis and in adenine nucleotide metabolism. Adenylate kinase activity is critical for regulation of the phosphate utilization and the AMP de novo biosynthesis pathways. The sequence is that of Adenylate kinase from Meyerozyma guilliermondii (strain ATCC 6260 / CBS 566 / DSM 6381 / JCM 1539 / NBRC 10279 / NRRL Y-324) (Yeast).